The chain runs to 702 residues: Putative methyltransferase NSUN7 (702 aa).

The active-site Nucleophile is the Cys-424. Disordered regions lie at residues 522-541, 567-593, and 675-702; these read KSSK…TKAA, ETVT…KHKL, and PTPS…RRWL. A compositionally biased stretch (basic residues) spans 523 to 534; the sequence is SSKREKKKKKSK. The segment covering 567-587 has biased composition (polar residues); that stretch reads ETVTKPSLPQKNTAQVGASSQ. Positions 681 to 691 are enriched in basic and acidic residues; that stretch reads RKGEKPKDDTR.

It belongs to the class I-like SAM-binding methyltransferase superfamily. RsmB/NOP family.

In terms of biological role, may have S-adenosyl-L-methionine-dependent methyl-transferase activity. The sequence is that of Putative methyltransferase NSUN7 (NSUN7) from Macaca fascicularis (Crab-eating macaque).